We begin with the raw amino-acid sequence, 172 residues long: Small ribosomal subunit protein uS5 (172 aa).

One can recognise an S5 DRBM domain in the interval Leu-17–Val-80.

The protein belongs to the universal ribosomal protein uS5 family. Part of the 30S ribosomal subunit. Contacts proteins S4 and S8.

Functionally, with S4 and S12 plays an important role in translational accuracy. In terms of biological role, located at the back of the 30S subunit body where it stabilizes the conformation of the head with respect to the body. The sequence is that of Small ribosomal subunit protein uS5 from Cupriavidus taiwanensis (strain DSM 17343 / BCRC 17206 / CCUG 44338 / CIP 107171 / LMG 19424 / R1) (Ralstonia taiwanensis (strain LMG 19424)).